Here is a 257-residue protein sequence, read N- to C-terminus: MSPVDVWVGSWRPHKPRGPIAAMYNSPGPTYALPGATGMNNHDPRMQKGPAFSFGIRHHNFHGNYSPGPGYLVPSNITRVGRDGTPAYSVYGRRKDIQPFQTPGPGSYSPENATKATYLSPPAFTLSARTKLFRNDQTPGPAAYMLPPVLGPKVVNKTSAPNVSFSGRSAIGSFHEDLRKTPGPGTYQVVDPCVYKHKGPQYSMTGRNMMPGDMTKKPGPGAHYPEMVCFTRAKAPSFSFGIRHSEYVAPTIVDGED.

STPGR repeat units follow at residues Pro-103–Arg-129, Pro-182–Arg-207, and Pro-218–Arg-243.

The protein belongs to the CIMAP family.

The protein localises to the cell projection. It localises to the cilium. Its subcellular location is the flagellum. The protein is Ciliary microtubule associated protein 1B (cimap1b) of Danio rerio (Zebrafish).